Reading from the N-terminus, the 190-residue chain is Probable nicotinate-nucleotide adenylyltransferase (190 aa).

Belongs to the NadD family.

The enzyme catalyses nicotinate beta-D-ribonucleotide + ATP + H(+) = deamido-NAD(+) + diphosphate. The protein operates within cofactor biosynthesis; NAD(+) biosynthesis; deamido-NAD(+) from nicotinate D-ribonucleotide: step 1/1. Functionally, catalyzes the reversible adenylation of nicotinate mononucleotide (NaMN) to nicotinic acid adenine dinucleotide (NaAD). The chain is Probable nicotinate-nucleotide adenylyltransferase from Borrelia turicatae (strain 91E135).